The chain runs to 229 residues: tRNA (guanine-N(1)-)-methyltransferase (229 aa).

S-adenosyl-L-methionine-binding positions include Gly109 and 129-134 (IGDFIL).

Belongs to the RNA methyltransferase TrmD family. In terms of assembly, homodimer.

The protein localises to the cytoplasm. The enzyme catalyses guanosine(37) in tRNA + S-adenosyl-L-methionine = N(1)-methylguanosine(37) in tRNA + S-adenosyl-L-homocysteine + H(+). Functionally, specifically methylates guanosine-37 in various tRNAs. The protein is tRNA (guanine-N(1)-)-methyltransferase of Helicobacter pylori (strain Shi470).